The following is a 259-amino-acid chain: Ribosomal RNA small subunit methyltransferase A (259 aa).

Residues Asn13, Leu15, Gly40, Glu61, Asp85, and Asn103 each coordinate S-adenosyl-L-methionine.

Belongs to the class I-like SAM-binding methyltransferase superfamily. rRNA adenine N(6)-methyltransferase family. RsmA subfamily.

The protein resides in the cytoplasm. The catalysed reaction is adenosine(1518)/adenosine(1519) in 16S rRNA + 4 S-adenosyl-L-methionine = N(6)-dimethyladenosine(1518)/N(6)-dimethyladenosine(1519) in 16S rRNA + 4 S-adenosyl-L-homocysteine + 4 H(+). Specifically dimethylates two adjacent adenosines (A1518 and A1519) in the loop of a conserved hairpin near the 3'-end of 16S rRNA in the 30S particle. May play a critical role in biogenesis of 30S subunits. The chain is Ribosomal RNA small subunit methyltransferase A from Neisseria meningitidis serogroup B (strain ATCC BAA-335 / MC58).